Reading from the N-terminus, the 315-residue chain is Small ribosomal subunit protein uS2 (315 aa).

The disordered stretch occupies residues 250–315 (LLEQGDAAKA…TESEKAPVSE (66 aa)). Composition is skewed to basic and acidic residues over residues 272–282 (VSAKNEAKSED) and 297–315 (TEAKIEAEATESEKAPVSE).

It belongs to the universal ribosomal protein uS2 family.

The sequence is that of Small ribosomal subunit protein uS2 from Clavibacter michiganensis subsp. michiganensis (strain NCPPB 382).